The following is a 252-amino-acid chain: Ribosomal RNA small subunit methyltransferase A (252 aa).

The S-adenosyl-L-methionine site is built by asparagine 10, leucine 12, glycine 36, glutamate 57, aspartate 81, and asparagine 98.

This sequence belongs to the class I-like SAM-binding methyltransferase superfamily. rRNA adenine N(6)-methyltransferase family. RsmA subfamily.

The protein localises to the cytoplasm. It carries out the reaction adenosine(1518)/adenosine(1519) in 16S rRNA + 4 S-adenosyl-L-methionine = N(6)-dimethyladenosine(1518)/N(6)-dimethyladenosine(1519) in 16S rRNA + 4 S-adenosyl-L-homocysteine + 4 H(+). Functionally, specifically dimethylates two adjacent adenosines (A1518 and A1519) in the loop of a conserved hairpin near the 3'-end of 16S rRNA in the 30S particle. May play a critical role in biogenesis of 30S subunits. This Mycoplasmopsis pulmonis (strain UAB CTIP) (Mycoplasma pulmonis) protein is Ribosomal RNA small subunit methyltransferase A.